A 234-amino-acid polypeptide reads, in one-letter code: Phosphoribosylaminoimidazole-succinocarboxamide synthase (234 aa).

This sequence belongs to the SAICAR synthetase family.

It carries out the reaction 5-amino-1-(5-phospho-D-ribosyl)imidazole-4-carboxylate + L-aspartate + ATP = (2S)-2-[5-amino-1-(5-phospho-beta-D-ribosyl)imidazole-4-carboxamido]succinate + ADP + phosphate + 2 H(+). It participates in purine metabolism; IMP biosynthesis via de novo pathway; 5-amino-1-(5-phospho-D-ribosyl)imidazole-4-carboxamide from 5-amino-1-(5-phospho-D-ribosyl)imidazole-4-carboxylate: step 1/2. This Clostridium botulinum (strain Okra / Type B1) protein is Phosphoribosylaminoimidazole-succinocarboxamide synthase.